The chain runs to 667 residues: Interleukin-17 receptor E (667 aa).

Residues Met-1–Ser-23 form the signal peptide. The Extracellular portion of the chain corresponds to Ala-24–His-454. Positions Leu-126–His-174 are disordered. Residues Asn-318, Asn-347, and Asn-364 are each glycosylated (N-linked (GlcNAc...) asparagine). A helical transmembrane segment spans residues Leu-455–Leu-475. Residues Thr-476–Gly-667 lie on the Cytoplasmic side of the membrane. The SEFIR domain maps to Ala-487–Arg-624.

As to quaternary structure, forms heterodimers with IL17RA; the heterodimer binds IL17C. As to expression, predominantly expressed in mucosal tissues with high levels in keratinocytes and colon epithelial cells. Very low expression in dermal fibroblasts. Expressed in various tumor cell lines.

Its subcellular location is the cell membrane. The protein localises to the cytoplasm. The protein resides in the secreted. In terms of biological role, specific functional receptor for IL17C. May be signaling through the NF-kappa-B and MAPK pathways. May require TRAF3IP2 /ACT1 for signaling. May be a crucial regulator in innate immunity to bacterial pathogens. Isoform 2 and isoform 4 may be either cytoplasmic inactive or dominant active forms. Isoform 3 and isoform 5 may act as soluble decoy receptors. The protein is Interleukin-17 receptor E (IL17RE) of Homo sapiens (Human).